We begin with the raw amino-acid sequence, 500 residues long: Lysine--tRNA ligase (500 aa).

Residues E410 and E417 each contribute to the Mg(2+) site.

The protein belongs to the class-II aminoacyl-tRNA synthetase family. As to quaternary structure, homodimer. It depends on Mg(2+) as a cofactor.

It localises to the cytoplasm. It carries out the reaction tRNA(Lys) + L-lysine + ATP = L-lysyl-tRNA(Lys) + AMP + diphosphate. The polypeptide is Lysine--tRNA ligase (Pseudomonas putida (strain ATCC 700007 / DSM 6899 / JCM 31910 / BCRC 17059 / LMG 24140 / F1)).